A 450-amino-acid chain; its full sequence is 23S rRNA (uracil(1939)-C(5))-methyltransferase RlmD (450 aa).

In terms of domain architecture, TRAM spans 1-62 (MPVAGPLEIV…PSYEQATLVD (62 aa)). Residues Cys75, Cys81, Cys84, and Cys163 each contribute to the [4Fe-4S] cluster site. S-adenosyl-L-methionine-binding residues include Gln271, Phe300, Asn305, Glu321, Asn349, and Asp370. Residue Cys406 is the Nucleophile of the active site.

It belongs to the class I-like SAM-binding methyltransferase superfamily. RNA M5U methyltransferase family. RlmD subfamily.

It catalyses the reaction uridine(1939) in 23S rRNA + S-adenosyl-L-methionine = 5-methyluridine(1939) in 23S rRNA + S-adenosyl-L-homocysteine + H(+). Catalyzes the formation of 5-methyl-uridine at position 1939 (m5U1939) in 23S rRNA. In Ralstonia nicotianae (strain ATCC BAA-1114 / GMI1000) (Ralstonia solanacearum), this protein is 23S rRNA (uracil(1939)-C(5))-methyltransferase RlmD.